The chain runs to 699 residues: TBC1 domain family member 23 (699 aa).

Residues 44–225 (PLPADLRAKV…AIWDGYLQQA (182 aa)) form the Rab-GAP TBC domain. Ser300 carries the phosphoserine modification. A Rhodanese domain is found at 334–446 (EGVRFFVVDC…LQQHLADINV (113 aa)). Residues 459–479 (STSGSRSSINSVDGESPNGSS) are compositionally biased toward polar residues. The disordered stretch occupies residues 459 to 483 (STSGSRSSINSVDGESPNGSSDRGM). Phosphoserine occurs at positions 469, 474, and 507. Position 514 is a phosphothreonine (Thr514). Residues 514–573 (TPVDRMSFNLPWPDRSCTERHVSSSDRVGKPYRGVKPVFSIGDEEEYDTDEIDSSSMSDD) are may mediate the interaction with C17orf75, FAM91A1 and WDR11. The interval 514–699 (TPVDRMSFNL…IMKVLDALES (186 aa)) is may mediate the interaction with WASHC1. Residues Ser520 and Ser571 each carry the phosphoserine modification. Residues 574–699 (DRKEVVNIQT…IMKVLDALES (126 aa)) form a may mediate the interaction with FKBP15 and WASHC2; required for endosome to Golgi trafficking region.

Directly interacts with GOLGA1 and GOLGA4. Interacts with FAM91A1, C17ORF75 and WDR11; the interaction recruits TBC1D23 to AP-1-derived vesicles. Directly interacts with WASHC1 and WASHC2A/FAM21A. Interacts with FKBP15. In terms of tissue distribution, isoform 1: Widely expressed, including in fetal adult brain (corpus callosum, pons, cerebellum), spinal cord, heart, skeletal muscle, thymus and bone marrow, and at lower levels in spleen. Hardly detected in liver, kidney, colon and testis. Isoform 2: Expressed at high levels in liver, kidney, colon and testis. Hardly detected in tissues expressing high levels of isoform 1. Expressed at low levels in spleen.

The protein localises to the golgi apparatus. It localises to the trans-Golgi network. It is found in the cytoplasmic vesicle. In terms of biological role, putative Rab GTPase-activating protein which plays a role in vesicular trafficking. Involved in endosome-to-Golgi trafficking. Acts as a bridging protein by binding simultaneously to golgins, including GOLGA1 and GOLGA4, located at the trans-Golgi, and to the WASH complex, located on endosome-derived vesicles. Together with WDR11 complex facilitates the golgin-mediated capture of vesicles generated using AP-1. Plays a role in brain development, including in cortical neuron positioning. May also be important for neurite outgrowth, possibly through its involvement in membrane trafficking and cargo delivery, 2 processes that are essential for axonal and dendritic growth. May act as a general inhibitor of innate immunity signaling, strongly inhibiting multiple TLR and dectin/CLEC7A-signaling pathways. Does not alter initial activation events, but instead affects maintenance of inflammatory gene expression several hours after bacterial lipopolysaccharide (LPS) challenge. This is TBC1 domain family member 23 (TBC1D23) from Homo sapiens (Human).